The following is a 209-amino-acid chain: Small ribosomal subunit protein uS4 (209 aa).

The S4 RNA-binding domain maps to 98–159 (RRLDSAVYRL…KSRKITRIND (62 aa)).

It belongs to the universal ribosomal protein uS4 family. Part of the 30S ribosomal subunit. Contacts protein S5. The interaction surface between S4 and S5 is involved in control of translational fidelity.

Functionally, one of the primary rRNA binding proteins, it binds directly to 16S rRNA where it nucleates assembly of the body of the 30S subunit. In terms of biological role, with S5 and S12 plays an important role in translational accuracy. The protein is Small ribosomal subunit protein uS4 of Syntrophotalea carbinolica (strain DSM 2380 / NBRC 103641 / GraBd1) (Pelobacter carbinolicus).